The sequence spans 189 residues: Large ribosomal subunit protein eL19A (189 aa).

Lys-21 participates in a covalent cross-link: Glycyl lysine isopeptide (Lys-Gly) (interchain with G-Cter in ubiquitin). Residues Ser-30 and Ser-37 each carry the phosphoserine modification. Residues Lys-53 and Lys-60 each participate in a glycyl lysine isopeptide (Lys-Gly) (interchain with G-Cter in ubiquitin) cross-link. The interval 58–85 (HSKSRTRAHAQSKREGRHSGYGKRKGTR) is disordered. Residues 59–68 (SKSRTRAHAQ) are compositionally biased toward basic residues. Residue Ser-91 is modified to Phosphoserine. Residues Lys-146 and Lys-186 each participate in a glycyl lysine isopeptide (Lys-Gly) (interchain with G-Cter in ubiquitin) cross-link. The tract at residues 164 to 189 (LKNRAARDRRAQRVAEKRDALLKEDA) is disordered.

Belongs to the eukaryotic ribosomal protein eL19 family. In terms of assembly, component of the large ribosomal subunit (LSU). Mature yeast ribosomes consist of a small (40S) and a large (60S) subunit. The 40S small subunit contains 1 molecule of ribosomal RNA (18S rRNA) and 33 different proteins (encoded by 57 genes). The large 60S subunit contains 3 rRNA molecules (25S, 5.8S and 5S rRNA) and 46 different proteins (encoded by 81 genes). eL19 lies in close proximity to the binding site for eukaryotic initiation factor eIF4G.

The protein localises to the cytoplasm. Component of the ribosome, a large ribonucleoprotein complex responsible for the synthesis of proteins in the cell. The small ribosomal subunit (SSU) binds messenger RNAs (mRNAs) and translates the encoded message by selecting cognate aminoacyl-transfer RNA (tRNA) molecules. The large subunit (LSU) contains the ribosomal catalytic site termed the peptidyl transferase center (PTC), which catalyzes the formation of peptide bonds, thereby polymerizing the amino acids delivered by tRNAs into a polypeptide chain. The nascent polypeptides leave the ribosome through a tunnel in the LSU and interact with protein factors that function in enzymatic processing, targeting, and the membrane insertion of nascent chains at the exit of the ribosomal tunnel. eL19 may play a role in the last stages of translation initiation, in particular subunit joining and shedding/releasing factors. The protein is Large ribosomal subunit protein eL19A of Saccharomyces cerevisiae (strain ATCC 204508 / S288c) (Baker's yeast).